The following is a 375-amino-acid chain: uncharacterized protein (375 aa).

Belongs to the IMPDH/GMPR family.

This is an uncharacterized protein from Mycobacterium leprae (strain TN).